The primary structure comprises 239 residues: SkfA peptide export ATP-binding protein SkfE (239 aa).

Residues 4–232 (MQVQNLSKCY…AEWRKEVIRL (229 aa)) form the ABC transporter domain. An ATP-binding site is contributed by 36-43 (GPNGAGKT).

It belongs to the ABC transporter superfamily. SkfA peptide export (TC 3.A.1.128.1) family.

Its subcellular location is the cell membrane. It carries out the reaction sulfate(out) + ATP + H2O = sulfate(in) + ADP + phosphate + H(+). It catalyses the reaction thiosulfate(out) + ATP + H2O = thiosulfate(in) + ADP + phosphate + H(+). Probably part of the ABC transporter SkfEF involved in the export of the bacteriocin SKF. Probably responsible for energy coupling to the transport system. The polypeptide is SkfA peptide export ATP-binding protein SkfE (Bacillus subtilis (strain 168)).